A 461-amino-acid polypeptide reads, in one-letter code: L-seryl-tRNA(Sec) selenium transferase (461 aa).

K294 carries the post-translational modification N6-(pyridoxal phosphate)lysine.

The protein belongs to the SelA family. Pyridoxal 5'-phosphate serves as cofactor.

It localises to the cytoplasm. The enzyme catalyses L-seryl-tRNA(Sec) + selenophosphate + H(+) = L-selenocysteinyl-tRNA(Sec) + phosphate. It functions in the pathway aminoacyl-tRNA biosynthesis; selenocysteinyl-tRNA(Sec) biosynthesis; selenocysteinyl-tRNA(Sec) from L-seryl-tRNA(Sec) (bacterial route): step 1/1. In terms of biological role, converts seryl-tRNA(Sec) to selenocysteinyl-tRNA(Sec) required for selenoprotein biosynthesis. In Haemophilus influenzae (strain PittEE), this protein is L-seryl-tRNA(Sec) selenium transferase.